Reading from the N-terminus, the 81-residue chain is Photosystem I iron-sulfur center (81 aa).

2 4Fe-4S ferredoxin-type domains span residues 2–31 and 39–68; these read AHSV…MIPW and IASA…VRVY. The [4Fe-4S] cluster site is built by cysteine 11, cysteine 14, cysteine 17, cysteine 21, cysteine 48, cysteine 51, cysteine 54, and cysteine 58.

As to quaternary structure, the eukaryotic PSI reaction center is composed of at least 11 subunits. It depends on [4Fe-4S] cluster as a cofactor.

It is found in the plastid. Its subcellular location is the chloroplast thylakoid membrane. It carries out the reaction reduced [plastocyanin] + hnu + oxidized [2Fe-2S]-[ferredoxin] = oxidized [plastocyanin] + reduced [2Fe-2S]-[ferredoxin]. Apoprotein for the two 4Fe-4S centers FA and FB of photosystem I (PSI); essential for photochemical activity. FB is the terminal electron acceptor of PSI, donating electrons to ferredoxin. The C-terminus interacts with PsaA/B/D and helps assemble the protein into the PSI complex. Required for binding of PsaD and PsaE to PSI. PSI is a plastocyanin-ferredoxin oxidoreductase, converting photonic excitation into a charge separation, which transfers an electron from the donor P700 chlorophyll pair to the spectroscopically characterized acceptors A0, A1, FX, FA and FB in turn. This chain is Photosystem I iron-sulfur center, found in Adiantum capillus-veneris (Maidenhair fern).